A 500-amino-acid polypeptide reads, in one-letter code: Na(+)/H(+) antiporter NhaB (500 aa).

A run of 11 helical transmembrane segments spans residues 23 to 43, 53 to 73, 96 to 116, 129 to 149, 150 to 170, 205 to 225, 238 to 258, 311 to 331, 350 to 370, 450 to 470, and 477 to 497; these read VVIC…GPVA, IFTL…LLLI, VILL…LLLF, AILA…LDAL, TVTA…HRVA, LLMH…VGEP, FVDF…AGLV, ILII…LMVI, FQDA…VAVI, ATPN…APLI, and MVWM…WAVT.

This sequence belongs to the NhaB Na(+)/H(+) (TC 2.A.34) antiporter family.

The protein localises to the cell inner membrane. It catalyses the reaction 2 Na(+)(in) + 3 H(+)(out) = 2 Na(+)(out) + 3 H(+)(in). In terms of biological role, na(+)/H(+) antiporter that extrudes sodium in exchange for external protons. The sequence is that of Na(+)/H(+) antiporter NhaB from Pseudomonas putida (strain ATCC 47054 / DSM 6125 / CFBP 8728 / NCIMB 11950 / KT2440).